A 513-amino-acid chain; its full sequence is Xylose import ATP-binding protein XylG (513 aa).

2 consecutive ABC transporter domains span residues 5–242 (LEMK…VGRE) and 259–505 (LRIE…LRSE). Residue 37–44 (GENGSGKS) participates in ATP binding.

The protein belongs to the ABC transporter superfamily. Xylose importer (TC 3.A.1.2.4) family. As to quaternary structure, the complex is composed of two ATP-binding proteins (XylG), two transmembrane proteins (XylH) and a solute-binding protein (XylF).

The protein resides in the cell inner membrane. The catalysed reaction is D-xylose(out) + ATP + H2O = D-xylose(in) + ADP + phosphate + H(+). In terms of biological role, part of the ABC transporter complex XylFGH involved in xylose import. Responsible for energy coupling to the transport system. In Shigella flexneri serotype 5b (strain 8401), this protein is Xylose import ATP-binding protein XylG.